The primary structure comprises 602 residues: Elongation factor 4 (602 aa).

A tr-type G domain is found at 6-188 (DRIRNFCIIA…RIVTRIPPPG (183 aa)). GTP contacts are provided by residues 18–23 (DHGKST) and 135–138 (NKID).

Belongs to the TRAFAC class translation factor GTPase superfamily. Classic translation factor GTPase family. LepA subfamily.

It is found in the cell membrane. It catalyses the reaction GTP + H2O = GDP + phosphate + H(+). Its function is as follows. Required for accurate and efficient protein synthesis under certain stress conditions. May act as a fidelity factor of the translation reaction, by catalyzing a one-codon backward translocation of tRNAs on improperly translocated ribosomes. Back-translocation proceeds from a post-translocation (POST) complex to a pre-translocation (PRE) complex, thus giving elongation factor G a second chance to translocate the tRNAs correctly. Binds to ribosomes in a GTP-dependent manner. The chain is Elongation factor 4 from Pelotomaculum thermopropionicum (strain DSM 13744 / JCM 10971 / SI).